Here is a 568-residue protein sequence, read N- to C-terminus: MTLRLSRRAYAEMYGPTTGDRIRLADTELLIEVERDHTLYGEEVKFGGGKVIRDGMGQSQLPAADVADTVITNAVILDHWGIVKADIAIKHGRIAAIGKAGNPDIQPGVTIAIGAATEIIAGEGLIVTAGGIDTHIHFISPQQIDEALASGVTTMIGGGTGPATGTNATTCTPGPWHMERMLQAADGWPINLGFLGKGNASRPQPLVEQIEAGAIGLKLHEDWGTTPAAIDNCLTVADDTDTQVAIHTDTLNEAGFVEATVAAFKGRTIHTYHTEGAGGGHAPDILKVCGEANVLPSSTNPTRPYTINTLDEHLDMLMVCHHLDPSIAEDLAFAESRIRRETIAAEDILHDLGALSMLSSDSQAMGRVGEVIIRTWQTAHKMKVQRGALTGDGARNDNFRAKRYVAKYTINPALTHGIAHEVGSIEPGKWADLVLWEPAFFGVKPAMIIKGGMIAVAQMGDPNASIPTPQPVHYREMFATRGGALARTSLTFVSQLALDAGISARYGLAKRLVPVRGCRTVTKRDMIHNAWQPAIRVDPETYDVVADGALLTCEPAAVLPMAQRYFLF.

Residues 130-568 (GGIDTHIHFI…LPMAQRYFLF (439 aa)) enclose the Urease domain. Ni(2+) is bound by residues His135, His137, and Lys218. Position 218 is an N6-carboxylysine (Lys218). His220 contributes to the substrate binding site. The Ni(2+) site is built by His247 and His273. The active-site Proton donor is the His321. Asp361 serves as a coordination point for Ni(2+).

It belongs to the metallo-dependent hydrolases superfamily. Urease alpha subunit family. As to quaternary structure, heterotrimer of UreA (gamma), UreB (beta) and UreC (alpha) subunits. Three heterotrimers associate to form the active enzyme. Requires Ni cation as cofactor. In terms of processing, carboxylation allows a single lysine to coordinate two nickel ions.

The protein resides in the cytoplasm. It carries out the reaction urea + 2 H2O + H(+) = hydrogencarbonate + 2 NH4(+). It participates in nitrogen metabolism; urea degradation; CO(2) and NH(3) from urea (urease route): step 1/1. This chain is Urease subunit alpha, found in Burkholderia pseudomallei (strain K96243).